The sequence spans 1624 residues: ATP-binding cassette sub-family A member 9 (1624 aa).

Residues 31–51 (LLEWLFSFLLVLFLYLFFSNL) form a helical membrane-spanning segment. N-linked (GlcNAc...) asparagine glycans are attached at residues Asn120 and Asn195. A run of 6 helical transmembrane segments spans residues 221–243 (VATDFFIFFCIISFSTFIYYVSV), 269–289 (SWGLMYAGFILIMATLMALIV), 300–320 (FVMVFTLFLLYGLSLITLAFL), 329–349 (FLTGLVVFLLIVFWGILGFPA), 354–374 (LPAFLEWTLCLLSPFAFTVGM), and 398–418 (LIIATLFMLVFDTLLYLVLTL). The 236-residue stretch at 481–716 (IRIKNLKKEY…WGIGYHLSLH (236 aa)) folds into the ABC transporter 1 domain. 517–524 (GHSGAGKT) contributes to the ATP binding site. A helical membrane pass occupies residues 864–884 (LWTILLLFGISFIPQLLEHLF). Asn949 carries N-linked (GlcNAc...) asparagine glycosylation. 6 helical membrane passes run 1026–1046 (TFFWIPMAASFTPYIAMSSIG), 1065–1085 (AYWFGQALVDVSLYFLILLLM), 1108–1128 (ILCSIGYVSSLVFLTYVISFI), 1136–1156 (SGIWSFFFLIVVIFSIVATDL), 1163–1183 (GLFFGTMLIPPFTLIGSLFIF), and 1200–1220 (EIVYLALLIPYLHFLIFLFIL). Positions 1288-1521 (LRKEYAGKKK…FGKDYLLEMK (234 aa)) constitute an ABC transporter 2 domain. Residue 1326-1333 (GHNGAGKS) participates in ATP binding.

This sequence belongs to the ABC transporter superfamily. ABCA family. As to expression, widely expressed with higher expression in heart.

The protein resides in the membrane. Functionally, transporter that may play a role in monocyte differentiation and lipid transport and homeostasis. This is ATP-binding cassette sub-family A member 9 (ABCA9) from Homo sapiens (Human).